A 728-amino-acid chain; its full sequence is U-box domain-containing protein 4 (728 aa).

Residues 296–370 (SVPKEFSCPI…SQWCGVYGLQ (75 aa)) enclose the U-box domain. 2 ARM repeats span residues 441-483 (GAIP…EQEG) and 526-568 (GAVE…ESCA).

It catalyses the reaction S-ubiquitinyl-[E2 ubiquitin-conjugating enzyme]-L-cysteine + [acceptor protein]-L-lysine = [E2 ubiquitin-conjugating enzyme]-L-cysteine + N(6)-ubiquitinyl-[acceptor protein]-L-lysine.. Its pathway is protein modification; protein ubiquitination. Possesses E3 ubiquitin-protein ligase in vitro. The sequence is that of U-box domain-containing protein 4 (PUB4) from Oryza sativa subsp. japonica (Rice).